Consider the following 317-residue polypeptide: Hydroxyacyl-CoA dehydrogenase ChsB1 (317 aa).

Residues L32, D51, D82, I83, N108, S168, Y181, K185, and T215 each coordinate NAD(+). Catalysis depends on residues S168, Y181, and K185.

Belongs to the short-chain dehydrogenases/reductases (SDR) family. In terms of assembly, homodimer, with 1 active site on each face.

The enzyme catalyses (22S)-hydroxy-3-oxo-chol-4-ene-24-oyl-CoA + NAD(+) = 3,22-dioxochol-4-en-24-oyl-CoA + NADH + H(+). It participates in steroid metabolism; cholesterol degradation. In terms of biological role, a reversible dehydrogenase involved in cholesterol side-chain degradation. Catalyzes the oxidation of hydroxyl-cholesterol-CoA ester metabolic intermediate (22S)-HOCO-CoA (3-oxo-chol-4-ene-(22S)-hydroxy-24-oyl-CoA), the product of ChsH3, has no activity on (22R)-HOCO-CoA (the product of EchA19). Also acts on (3R)-hydroxyoctanoyl-CoA and 17-beta-hydroxyandrost-4-en-3-one, but not on 7-alpha-hydroxyandrost-4-en-3-one, uses NAD(+) but not NADP(+). This chain is Hydroxyacyl-CoA dehydrogenase ChsB1, found in Mycobacterium tuberculosis (strain ATCC 25618 / H37Rv).